A 202-amino-acid polypeptide reads, in one-letter code: LexA repressor (202 aa).

Positions 28-48 (RAEIAQRLGFRSPNAAEEHLK) form a DNA-binding region, H-T-H motif. Catalysis depends on for autocatalytic cleavage activity residues Ser-119 and Lys-156.

It belongs to the peptidase S24 family. As to quaternary structure, homodimer.

The catalysed reaction is Hydrolysis of Ala-|-Gly bond in repressor LexA.. In terms of biological role, represses a number of genes involved in the response to DNA damage (SOS response), including recA and lexA. Binds to the 16 bp palindromic sequence 5'-CTGTATATATATACAG-3'. In the presence of single-stranded DNA, RecA interacts with LexA causing an autocatalytic cleavage which disrupts the DNA-binding part of LexA, leading to derepression of the SOS regulon and eventually DNA repair. This is LexA repressor from Yersinia enterocolitica serotype O:8 / biotype 1B (strain NCTC 13174 / 8081).